Consider the following 190-residue polypeptide: UPF0301 protein RSc0675 (190 aa).

The protein belongs to the UPF0301 (AlgH) family.

This chain is UPF0301 protein RSc0675, found in Ralstonia nicotianae (strain ATCC BAA-1114 / GMI1000) (Ralstonia solanacearum).